A 2496-amino-acid polypeptide reads, in one-letter code: Hornerin (2496 aa).

The S-100-like stretch occupies residues 1-81; sequence MPKLLESIVT…TEYLLMILKL (81 aa). EF-hand domains follow at residues 13–48 and 49–84; these read DVFY…LKNP and DDPD…LTKA. Ca(2+)-binding residues include methionine 27, glutamate 32, aspartate 62, aspartate 64, asparagine 66, lysine 68, and glutamate 73. Residues 82 to 98 form a s (spacer) region; the sequence is TKACNKIIGKDYCQASG. The segment at 97 to 2496 is disordered; the sequence is SGSKQKNHSH…SGQTSGCGSG (2400 aa). The stretch at 99–145 is one 1; truncated repeat; that stretch reads SKQKNHSHQHQEEQSKKETENKEQKGSISSSAGENDSYSRGSRGSNK. Over residues 107–123 the composition is skewed to basic and acidic residues; that stretch reads QHQEEQSKKETENKEQK. A compositionally biased stretch (polar residues) spans 124 to 134; that stretch reads GSISSSAGEND. Basic residues predominate over residues 144–153; the sequence is NKSKSKKLRK. Tandem repeats lie at residues 146 to 231, 232 to 321, 326 to 400, 401 to 491, 492 to 577, 578 to 668, 669 to 748, 749 to 839, 840 to 926, 927 to 1017, 1018 to 1097, 1098 to 1188, 1189 to 1274, 1275 to 1365, 1366 to 1445, 1446 to 1536, 1537 to 1622, 1623 to 1713, 1714 to 1793, 1794 to 1884, 1885 to 1970, 1971 to 2061, 2062 to 2141, 2142 to 2232, 2233 to 2312, 2313 to 2403, and 2410 to 2496. Low complexity-rich tracts occupy residues 183-194, 200-246, and 270-286; these read SGFSNSSGNGRP, SGFP…SGHS, and RESS…SEEP. Polar residues-rich tracts occupy residues 294–319 and 326–355; these read RKNS…QGFG and SGQS…SSES. Low complexity-rich tracts occupy residues 362–379, 394–415, and 423–448; these read VSGS…STSG, SSGS…SGQS, and SGSR…QQFG. Over residues 449-464 the composition is skewed to gly residues; the sequence is SGSGRSSGFSQGGSGQ. Over residues 465–565 the composition is skewed to low complexity; sequence GRSSRGGQQG…GQTSSSTRQG (101 aa). Phosphoserine occurs at positions 506 and 508. Over residues 566 to 576 the composition is skewed to gly residues; sequence SGQGQASGSGR. 2 stretches are compositionally biased toward low complexity: residues 577–593 and 600–625; these read YGAS…GQST and SGSR…QRYG. A compositionally biased stretch (gly residues) spans 626-641; that stretch reads SGSGESSGFSQGGSGQ. 2 stretches are compositionally biased toward low complexity: residues 642–670 and 679–713; these read GRSS…SRHG and SGQQ…GSGS. At arginine 646 the chain carries Omega-N-methylarginine. Serine 716 carries the post-translational modification Phosphoserine. The span at 723 to 736 shows a compositional bias: low complexity; it reads GSTSGQTASSTRQG. Gly residues predominate over residues 737–747; that stretch reads SGQGQASGSGR. Low complexity-rich tracts occupy residues 748 to 764, 771 to 796, 804 to 884, and 891 to 914; these read CGAS…GQST, SGSR…QRFG, GFSQ…SRPA, and SGRS…TRQG. Residue serine 815 is modified to Phosphoserine. Gly residues predominate over residues 915-925; that stretch reads SGQGQASGSGR. 2 stretches are compositionally biased toward low complexity: residues 926–942 and 949–974; these read YGAS…GQST and SGSR…QRYG. The segment covering 975–990 has biased composition (gly residues); the sequence is SGSGESSGFSQGGSGQ. Low complexity-rich tracts occupy residues 991-1019, 1028-1062, and 1072-1085; these read GRSS…SRHG, SGQQ…GSGS, and GSTS…TRQG. Arginine 995 bears the Omega-N-methylarginine mark. A compositionally biased stretch (gly residues) spans 1086 to 1096; the sequence is SGQGQASGSGR. Composition is skewed to low complexity over residues 1097–1113, 1120–1145, and 1153–1262; these read CGAS…GQST, SGSR…QRFG, and GFSQ…TRQG. Residue serine 1229 is modified to Phosphoserine. Residues 1263–1273 are compositionally biased toward gly residues; sequence SGQGQASGSGR. Residues 1281–1292 are compositionally biased toward polar residues; it reads TSGCRSGQSTRY. Over residues 1298–1322 the composition is skewed to low complexity; the sequence is GSRNSSTQSRGRSTSRESSTSQRYG. A compositionally biased stretch (gly residues) spans 1323–1338; sequence SGSGESSGFSQGGSGQ. Composition is skewed to low complexity over residues 1339 to 1367, 1376 to 1410, and 1420 to 1433; these read GRSS…SRHG, SGQQ…GSGS, and GSTS…TRQG. An Omega-N-methylarginine modification is found at arginine 1343. Residues 1434–1444 are compositionally biased toward gly residues; it reads SGQGQASGSGR. Composition is skewed to low complexity over residues 1445–1461, 1468–1493, and 1501–1610; these read CGAS…GQST, SGSR…QRFG, and GFSQ…TRQG. Serine 1551 and serine 1553 each carry phosphoserine. Residues 1611–1621 are compositionally biased toward gly residues; the sequence is SGQGQASGSGR. 2 stretches are compositionally biased toward low complexity: residues 1622 to 1631 and 1645 to 1670; these read YGASSGQTSG and SGSR…QRCG. Serine 1650 carries the phosphoserine modification. Residues 1671–1686 show a composition bias toward gly residues; sequence SGSGESSGFSQGGSGQ. Low complexity-rich tracts occupy residues 1687-1715, 1724-1758, and 1768-1781; these read GRSS…SRHG, SGQQ…GSGS, and GSTS…TRQG. Arginine 1691 carries the omega-N-methylarginine modification. Over residues 1782-1792 the composition is skewed to gly residues; the sequence is SGQGQASGSGR. Residues 1800–1811 show a composition bias toward polar residues; that stretch reads TSGCGSDQSTRY. Composition is skewed to low complexity over residues 1816 to 1841 and 1849 to 1958; these read SGSR…QRFG and GFSQ…TRQG. Positions 1959–1969 are enriched in gly residues; that stretch reads SGQGQASGSGR. 2 stretches are compositionally biased toward low complexity: residues 1970–1986 and 1993–2018; these read YGAS…GQST and SGSR…QRYG. The residue at position 2011 (serine 2011) is a Phosphoserine. The span at 2019-2034 shows a compositional bias: gly residues; that stretch reads SGSGESSGFSQGGSGQ. 2 stretches are compositionally biased toward low complexity: residues 2035 to 2063 and 2072 to 2106; these read GRSS…SRHG and SGQQ…GSGS. Arginine 2039 carries the omega-N-methylarginine modification. Phosphoserine occurs at positions 2109 and 2124. Positions 2116-2129 are enriched in low complexity; the sequence is GSTSGQTASSTRQG. The span at 2130–2140 shows a compositional bias: gly residues; that stretch reads SGQGQASGSGR. Low complexity-rich tracts occupy residues 2141 to 2157 and 2164 to 2189; these read CGAS…GQST and SGSR…QRYG. A compositionally biased stretch (gly residues) spans 2190–2205; that stretch reads SGSGESSGFSQGGSGQ. 2 stretches are compositionally biased toward low complexity: residues 2206-2234 and 2243-2300; these read GRSS…SRHG and SGQQ…TRQG. An Omega-N-methylarginine modification is found at arginine 2210. Residues 2301-2311 show a composition bias toward gly residues; the sequence is SGQGQASGSGR. Composition is skewed to low complexity over residues 2312–2328 and 2335–2360; these read YGAS…GQST and SGSR…QRYG. Position 2353 is a phosphoserine (serine 2353). The segment covering 2361–2376 has biased composition (gly residues); it reads SGSGESSGFSQGGSGQ. Low complexity-rich tracts occupy residues 2377 to 2405, 2414 to 2448, and 2458 to 2471; these read GRSS…SRHG, SGQQ…GSGS, and GSTS…TRQG. Arginine 2381 carries the omega-N-methylarginine modification. Positions 2472–2482 are enriched in gly residues; sequence SGQGQASGSGR.

The protein belongs to the S100-fused protein family. This sequence in the N-terminal section; belongs to the S-100 family. Processed during the process of epidermal differentiation. Post-translationally, forms covalent cross-links mediated by transglutaminase TGM3, between glutamine and the epsilon-amino group of lysine residues (in vitro). Embryonic skin. Highest level in the adult forestomach followed by the skin. Lower levels in the tongue, esophagus. Detected in the granular and cornified layers of the mature epidermis.

It is found in the cytoplasmic granule. Component of the epidermal cornified cell envelopes. The chain is Hornerin (Hrnr) from Mus musculus (Mouse).